A 150-amino-acid chain; its full sequence is Small ribosomal subunit protein uS15 (150 aa).

Residues 1–10 show a composition bias toward basic residues; the sequence is MPHRSRHKRG. The tract at residues 1–21 is disordered; the sequence is MPHRSRHKRGSSGSVRPATKT.

The protein belongs to the universal ribosomal protein uS15 family. In terms of assembly, part of the 30S ribosomal subunit.

The chain is Small ribosomal subunit protein uS15 from Caldivirga maquilingensis (strain ATCC 700844 / DSM 13496 / JCM 10307 / IC-167).